A 139-amino-acid polypeptide reads, in one-letter code: D-ribose pyranase (139 aa).

H20 acts as the Proton donor in catalysis. Residues D28, H106, and 128 to 130 (YAN) each bind substrate.

Belongs to the RbsD / FucU family. RbsD subfamily. As to quaternary structure, homodecamer.

The protein resides in the cytoplasm. It catalyses the reaction beta-D-ribopyranose = beta-D-ribofuranose. It functions in the pathway carbohydrate metabolism; D-ribose degradation; D-ribose 5-phosphate from beta-D-ribopyranose: step 1/2. Catalyzes the interconversion of beta-pyran and beta-furan forms of D-ribose. This Escherichia coli O139:H28 (strain E24377A / ETEC) protein is D-ribose pyranase.